A 269-amino-acid polypeptide reads, in one-letter code: CCAAT/enhancer-binding protein delta (269 aa).

Disordered regions lie at residues 1-48 (MSAA…PGAA), 97-133 (PLEL…APGS), and 151-219 (AAGQ…NQEM). An N-acetylserine modification is found at Ser2. Composition is skewed to low complexity over residues 36–48 (GAEP…PGAA) and 97–107 (PLELLPGGPAR). A Glycyl lysine isopeptide (Lys-Gly) (interchain with G-Cter in SUMO) cross-link involves residue Lys120. Over residues 155–175 (PTPPTSPEPPRSSPRQTPAPG) the composition is skewed to pro residues. Residues 177–201 (AREKSAGKRGPDRGSPEYRQRRERN) are compositionally biased toward basic and acidic residues. The region spanning 191–254 (SPEYRQRRER…AGLRQFFKQL (64 aa)) is the bZIP domain. Residues 195–222 (RQRRERNNIAVRKSRDKAKRRNQEMQQK) form a basic motif region. Residues 226–254 (LSAENEKLHQRVEQLTRDLAGLRQFFKQL) form a leucine-zipper region.

Belongs to the bZIP family. C/EBP subfamily. As to quaternary structure, binds DNA as a homodimer and as a heterodimer. Can form stable heterodimers with CEBPB. Can form stable heterodimers with CEBPA and CEBPE. Directly interacts with SPI1/PU.1; this interaction does not affect DNA-binding properties of each partner. Interacts with PRDM16.

It localises to the nucleus. Transcription activator that recognizes two different DNA motifs: the CCAAT homology common to many promoters and the enhanced core homology common to many enhancers. Important transcription factor regulating the expression of genes involved in immune and inflammatory responses. Transcriptional activator that enhances IL6 transcription alone and as heterodimer with CEBPB. The protein is CCAAT/enhancer-binding protein delta (CEBPD) of Homo sapiens (Human).